The primary structure comprises 913 residues: Calcium-activated chloride channel regulator 1 (913 aa).

An N-terminal signal peptide occupies residues 1–21 (MGPFKSSVFILILHLLEGALS). The interval 46–199 (DETLIQQIKD…GITGKIEVNK (154 aa)) is metalloprotease domain. H156 provides a ligand contact to Zn(2+). E157 is an active-site residue. Residues H160 and D167 each contribute to the Zn(2+) site. Residues 306-475 (IVCLVLDKSG…NGLIDAFGAL (170 aa)) form the VWFA domain. N-linked (GlcNAc...) asparagine glycans are attached at residues N503, N769, N803, N809, N830, N835, N885, and N889. Residues 866-885 (PPQTPPETPSPDETSAPCPN) are disordered.

It belongs to the CLCR family. In terms of processing, glycosylated. Post-translationally, the translation product is autoproteolytically cleaved by the metalloprotease domain in the endoplasmic reticulum into a N-terminal and a C-terminal products that remain physically associated with each other. The cleavage is necessary for calcium-activated chloride channel (CaCC) activation activity.

It is found in the secreted. The protein resides in the extracellular space. In terms of biological role, may be involved in mediating calcium-activated chloride conductance. May play critical roles in goblet cell metaplasia, mucus hypersecretion, cystic fibrosis and AHR. May be involved in the regulation of mucus production and/or secretion by goblet cells. Involved in the regulation of tissue inflammation in the innate immune response. May play a role as a tumor suppressor. Induces MUC5AC. The protein is Calcium-activated chloride channel regulator 1 (CLCA1) of Macaca mulatta (Rhesus macaque).